The chain runs to 491 residues: Probable glycine dehydrogenase (decarboxylating) subunit 2 (491 aa).

Lys-264 carries the N6-(pyridoxal phosphate)lysine modification.

It belongs to the GcvP family. C-terminal subunit subfamily. As to quaternary structure, the glycine cleavage system is composed of four proteins: P, T, L and H. In this organism, the P 'protein' is a heterodimer of two subunits. Requires pyridoxal 5'-phosphate as cofactor.

The catalysed reaction is N(6)-[(R)-lipoyl]-L-lysyl-[glycine-cleavage complex H protein] + glycine + H(+) = N(6)-[(R)-S(8)-aminomethyldihydrolipoyl]-L-lysyl-[glycine-cleavage complex H protein] + CO2. Its function is as follows. The glycine cleavage system catalyzes the degradation of glycine. The P protein binds the alpha-amino group of glycine through its pyridoxal phosphate cofactor; CO(2) is released and the remaining methylamine moiety is then transferred to the lipoamide cofactor of the H protein. This chain is Probable glycine dehydrogenase (decarboxylating) subunit 2, found in Coxiella burnetii (strain CbuG_Q212) (Coxiella burnetii (strain Q212)).